A 504-amino-acid polypeptide reads, in one-letter code: UNC93-like protein C922.05c (504 aa).

Helical transmembrane passes span 64 to 84, 97 to 116, 123 to 145, 149 to 169, 186 to 206, 219 to 239, 275 to 293, 310 to 330, 343 to 363, 391 to 411, and 452 to 472; these read IIVS…SGLG, ANVA…GSIC, LTLA…YKHV, GFVI…WAAQ, IAIF…VPLA, GTYA…LFMV, YWVL…FTTY, LNNL…ALFL, VGWG…LAFQ, FLYI…YWII, and YFAS…PVIW.

The protein belongs to the unc-93 family.

It localises to the cytoplasm. It is found in the membrane. This Schizosaccharomyces pombe (strain 972 / ATCC 24843) (Fission yeast) protein is UNC93-like protein C922.05c.